We begin with the raw amino-acid sequence, 165 residues long: MLNKSLLIRFVLTILIIVQVIIFDTQPVQAAVDSYVKRYLDAEIPVGIKLNKQGELKNFSAEDLSEGKQTFAKNCLNCHVGGANLVNPSVSLSLEKLKGATPPRDDLNNLVAFLRDPMIYDGSSYTLFCRQITENWMSQQEVENIAAFILRAAQKAPYWGVENVR.

A signal peptide spans Met1–Ala30. Residues Cys75, Cys78, His79, and Cys129 each coordinate heme c.

This sequence belongs to the cytochrome c family. PsbV subfamily. The cofactor is heme c.

The protein resides in the cellular thylakoid membrane. Possible low-potential cytochrome c. The chain is Cytochrome c-550-like protein (psbV2) from Trichodesmium erythraeum (strain IMS101).